A 485-amino-acid polypeptide reads, in one-letter code: Ras-like GTPase YcjX (485 aa).

The Walker A motif signature appears at 33–40; sequence GLSGAGKT. The GTP site is built by Ser-35, Gly-36, Gly-38, Lys-39, Thr-40, Ala-41, Trp-110, Ser-113, Thr-114, Arg-115, Lys-355, Asp-357, and His-358. Residues Gly-36, Gly-38, Lys-39, Thr-40, Ala-41, Trp-110, Ser-113, and Thr-114 each coordinate GDP. 6 residues coordinate GDP: Lys-355, Asp-357, His-358, Ser-395, Ala-396, and Ile-397. Ile-397 serves as a coordination point for GTP.

Monomer in solution. Requires Mg(2+) as cofactor.

The enzyme catalyses GTP + H2O = GDP + phosphate + H(+). With respect to regulation, alternates between an inactive form bound to GDP and an active form bound to GTP. Likely activated by a guanine nucleotide-exchange factor (GEF). In terms of biological role, binds GTP and GDP. Has intrinsic GTPase activity. Does not hydrolyze ATP. May act as a transducer of stress responses. In Shewanella oneidensis (strain ATCC 700550 / JCM 31522 / CIP 106686 / LMG 19005 / NCIMB 14063 / MR-1), this protein is Ras-like GTPase YcjX.